We begin with the raw amino-acid sequence, 274 residues long: MWPAPAKLNLFLHVIGRRADGYHLLQTVFRFIDRADTLRFEPRSDGEIVLATPIPGVPTDSDLTVRAARLLQQASACRQGATIHLDKQLPMGGGLGGGSSDAATVLLALNHLWQTGLTRPQLEKLGLTLGADVPVFVHGHNTFAEGIGEAFTDIELPPQSYLVLHPAIHVPTAAIFGAPELKRDTPPIRHGEWQPGQGHNDLEAVACAKFPAVAEYLNWLKQHAPQAMMTGSGACVFAGFASRREAEAILAQCPADMNAWIADGLGEHPLAKIS.

The active site involves lysine 7. 90 to 100 (PMGGGLGGGSS) serves as a coordination point for ATP. Residue aspartate 132 is part of the active site.

This sequence belongs to the GHMP kinase family. IspE subfamily.

It carries out the reaction 4-CDP-2-C-methyl-D-erythritol + ATP = 4-CDP-2-C-methyl-D-erythritol 2-phosphate + ADP + H(+). It participates in isoprenoid biosynthesis; isopentenyl diphosphate biosynthesis via DXP pathway; isopentenyl diphosphate from 1-deoxy-D-xylulose 5-phosphate: step 3/6. Catalyzes the phosphorylation of the position 2 hydroxy group of 4-diphosphocytidyl-2C-methyl-D-erythritol. The protein is 4-diphosphocytidyl-2-C-methyl-D-erythritol kinase of Dechloromonas aromatica (strain RCB).